Consider the following 89-residue polypeptide: Small ribosomal subunit protein uS15 (89 aa).

This sequence belongs to the universal ribosomal protein uS15 family. As to quaternary structure, part of the 30S ribosomal subunit. Forms a bridge to the 50S subunit in the 70S ribosome, contacting the 23S rRNA.

Functionally, one of the primary rRNA binding proteins, it binds directly to 16S rRNA where it helps nucleate assembly of the platform of the 30S subunit by binding and bridging several RNA helices of the 16S rRNA. Forms an intersubunit bridge (bridge B4) with the 23S rRNA of the 50S subunit in the ribosome. The chain is Small ribosomal subunit protein uS15 from Streptococcus suis (strain 98HAH33).